Reading from the N-terminus, the 255-residue chain is NADPH-dependent FMN reductase ArsH (255 aa).

43-50 (SLRARSFS) lines the FMN pocket.

This sequence belongs to the ArsH family. As to quaternary structure, homotetramer. Requires FMN as cofactor.

Functionally, has NADPH-dependent FMN reductase activity and very low azoreductase activity. No activity with NADH. In Shigella flexneri, this protein is NADPH-dependent FMN reductase ArsH.